Reading from the N-terminus, the 275-residue chain is Release factor glutamine methyltransferase (275 aa).

Residues 114–118 (GTGSG), Asp137, Trp165, and Asn180 contribute to the S-adenosyl-L-methionine site. 180–183 (NPPY) provides a ligand contact to substrate.

This sequence belongs to the protein N5-glutamine methyltransferase family. PrmC subfamily.

The enzyme catalyses L-glutaminyl-[peptide chain release factor] + S-adenosyl-L-methionine = N(5)-methyl-L-glutaminyl-[peptide chain release factor] + S-adenosyl-L-homocysteine + H(+). In terms of biological role, methylates the class 1 translation termination release factors RF1/PrfA and RF2/PrfB on the glutamine residue of the universally conserved GGQ motif. This chain is Release factor glutamine methyltransferase, found in Xylella fastidiosa (strain 9a5c).